Here is a 433-residue protein sequence, read N- to C-terminus: Glutamate-1-semialdehyde 2,1-aminomutase (433 aa).

K266 is subject to N6-(pyridoxal phosphate)lysine.

The protein belongs to the class-III pyridoxal-phosphate-dependent aminotransferase family. HemL subfamily. Homodimer. It depends on pyridoxal 5'-phosphate as a cofactor.

It localises to the cytoplasm. The enzyme catalyses (S)-4-amino-5-oxopentanoate = 5-aminolevulinate. It participates in porphyrin-containing compound metabolism; protoporphyrin-IX biosynthesis; 5-aminolevulinate from L-glutamyl-tRNA(Glu): step 2/2. The sequence is that of Glutamate-1-semialdehyde 2,1-aminomutase from Psychrobacter cryohalolentis (strain ATCC BAA-1226 / DSM 17306 / VKM B-2378 / K5).